The primary structure comprises 653 residues: tRNA 5-methylaminomethyl-2-thiouridine biosynthesis bifunctional protein MnmC (653 aa).

The interval 1–236 (MPDRLVPATL…KFAMLVGEYA (236 aa)) is tRNA (mnm(5)s(2)U34)-methyltransferase. The segment at 260–653 (IGAGLAGCAL…IRALRGRKLG (394 aa)) is FAD-dependent cmnm(5)s(2)U34 oxidoreductase.

The protein in the N-terminal section; belongs to the methyltransferase superfamily. tRNA (mnm(5)s(2)U34)-methyltransferase family. This sequence in the C-terminal section; belongs to the DAO family. FAD is required as a cofactor.

It is found in the cytoplasm. It carries out the reaction 5-aminomethyl-2-thiouridine(34) in tRNA + S-adenosyl-L-methionine = 5-methylaminomethyl-2-thiouridine(34) in tRNA + S-adenosyl-L-homocysteine + H(+). Its function is as follows. Catalyzes the last two steps in the biosynthesis of 5-methylaminomethyl-2-thiouridine (mnm(5)s(2)U) at the wobble position (U34) in tRNA. Catalyzes the FAD-dependent demodification of cmnm(5)s(2)U34 to nm(5)s(2)U34, followed by the transfer of a methyl group from S-adenosyl-L-methionine to nm(5)s(2)U34, to form mnm(5)s(2)U34. The chain is tRNA 5-methylaminomethyl-2-thiouridine biosynthesis bifunctional protein MnmC from Burkholderia vietnamiensis (strain G4 / LMG 22486) (Burkholderia cepacia (strain R1808)).